We begin with the raw amino-acid sequence, 137 residues long: Actin-depolymerizing factor 7 (137 aa).

Position 6 is a phosphoserine (serine 6). One can recognise an ADF-H domain in the interval 7-137 (GMAVEDECKL…SFDIIKSRAL (131 aa)).

It belongs to the actin-binding proteins ADF family. As to expression, specifically expressed in pollen.

The protein resides in the cytoplasm. It localises to the cytoskeleton. Actin-depolymerizing protein. Severs actin filaments (F-actin) and binds to actin monomers. Binds monomeric actin (G-actin) with a marked preference for the ADP-loaded form and inhibits the rate of nucleotide exchange on G-actin. Required for pollen tube growth. Promotes turnover of longitudinal actin cables by severing actin filaments in pollen tubes. This Arabidopsis thaliana (Mouse-ear cress) protein is Actin-depolymerizing factor 7 (ADF7).